The primary structure comprises 410 residues: Imidazolonepropionase (410 aa).

The Fe(3+) site is built by His-71 and His-73. Zn(2+) is bound by residues His-71 and His-73. Residues Arg-80, Tyr-143, and His-175 each coordinate 4-imidazolone-5-propanoate. Tyr-143 contributes to the N-formimidoyl-L-glutamate binding site. His-235 contacts Fe(3+). Residue His-235 coordinates Zn(2+). Glu-238 provides a ligand contact to 4-imidazolone-5-propanoate. Position 309 (Asp-309) interacts with Fe(3+). Residue Asp-309 coordinates Zn(2+).

This sequence belongs to the metallo-dependent hydrolases superfamily. HutI family. The cofactor is Zn(2+). Requires Fe(3+) as cofactor.

Its subcellular location is the cytoplasm. It carries out the reaction 4-imidazolone-5-propanoate + H2O = N-formimidoyl-L-glutamate. The protein operates within amino-acid degradation; L-histidine degradation into L-glutamate; N-formimidoyl-L-glutamate from L-histidine: step 3/3. Catalyzes the hydrolytic cleavage of the carbon-nitrogen bond in imidazolone-5-propanoate to yield N-formimidoyl-L-glutamate. It is the third step in the universal histidine degradation pathway. This Thermoplasma acidophilum (strain ATCC 25905 / DSM 1728 / JCM 9062 / NBRC 15155 / AMRC-C165) protein is Imidazolonepropionase.